The primary structure comprises 313 residues: Meiotically up-regulated gene 100 protein, mitochondrial (313 aa).

2 helical membrane-spanning segments follow: residues 147–167 and 178–198; these read VFDYLFFLYGLSGTSILYTAG and SGFITPFFQLLLLVLLFTLTF.

The protein localises to the mitochondrion inner membrane. Its function is as follows. Has a role in meiosis. This chain is Meiotically up-regulated gene 100 protein, mitochondrial (mug100), found in Schizosaccharomyces pombe (strain 972 / ATCC 24843) (Fission yeast).